Consider the following 383-residue polypeptide: Photosynthetic reaction center cytochrome c subunit (383 aa).

Positions 1-22 (MNLGKQLTLPAVAVVASVVLLG) are cleaved as a signal peptide. A lipid anchor (N-palmitoyl cysteine) is attached at Cys23. Residue Cys23 is the site of S-diacylglycerol cysteine attachment. Heme-binding residues include Met94, Cys107, Cys110, His111, Met130, His144, Cys152, Cys155, His156, Met236, Cys247, Cys250, His251, Cys307, Cys310, and His311. Residues 335-383 (PAEAAPATEEAPAAEAEAVEAAPVEEAAPAPVEQAAAPVEDAAPAPQQL) form a disordered region.

As to quaternary structure, component of the photosynthetic reaction center composed of protein subunits L (PufL), M (PufM), H (PuhA) and cytochrome C (PufC). The reaction center interacts with light-harvesting antenna complex LH1. In terms of processing, binds 4 heme groups per subunit.

The protein resides in the cellular chromatophore membrane. Its function is as follows. The reaction center of purple bacteria contains a tightly bound cytochrome molecule which re-reduces the photo oxidized primary electron donor. This chain is Photosynthetic reaction center cytochrome c subunit (pufC), found in Allochromatium vinosum (strain ATCC 17899 / DSM 180 / NBRC 103801 / NCIMB 10441 / D) (Chromatium vinosum).